Reading from the N-terminus, the 1469-residue chain is Chromosome condensation protein dpy-27 (1469 aa).

The disordered stretch occupies residues 1–25 (MQPFKRRALTSDDDRPYADTDSMPE). A compositionally biased stretch (basic and acidic residues) spans 9–18 (LTSDDDRPYA). Residue 122-129 (GPNGSGKS) coordinates ATP. Residues 356 to 542 (ELEENKDIML…KGTLQTMMAE (187 aa)) are a coiled coil. Residues 621–736 (PGFKGRLGDL…VDSLEEATRI (116 aa)) enclose the SMC hinge domain. Positions 758 to 781 (GALTGGGKPTTGRIRNDNNPNMSG) are disordered. 3 coiled-coil regions span residues 805 to 974 (LKLQ…AQLE), 1016 to 1056 (AYQT…DIIE), and 1159 to 1182 (TSAK…RMAR). A disordered region spans residues 1404-1469 (LPEFNRFPPA…VQRRVRRSRH (66 aa)). Over residues 1439–1449 (EEEDEEDELIE) the composition is skewed to acidic residues.

Belongs to the SMC family. SMC4 subfamily. Component of the dosage compensation complex, which contains the mix-1/SMC2 and dpy-27/SMC4 heterodimer, and three non SMC subunits that probably regulate the complex: dpy-26, capg-1 and dpy-28. Within the complex, interacts with dpy-28, mix-1, dpy-26 and capg-1. Interacts with dpy-21. Interacts with dpy-28; the interaction is required for dpy-28 protein stability and dpy-28 association with the X chromosome. Interacts with smcl-1.

The protein resides in the nucleus. It is found in the chromosome. In terms of biological role, central component of the condensin I-like dosage compensation complex that associates specifically with hermaphrodite X chromosomes to reduce their gene transcription throughout development. Its strong similarity with the condensin subunit smc4 suggests that it may reduce the X-chromosome transcript level by condensing the chromatin structure during interphase. Involved in the recruitment of the dosage compensation proteins mix-1 and dpy-21 to the X chromosome. Might be involved in the reduction of histone H4 lysine 16 acetylation (H4K16ac) on dosage compensated X chromosomes. As a member of the dosage compensation complex, also binds to regulatory regions of the autosomal her-1 gene, required for male development, possibly contributing to its repression in hermaphrodites. Also plays a role in the regulation of growth and body fat metabolism downstream of the TOR complex 2 pathway. This is Chromosome condensation protein dpy-27 (dpy-27) from Caenorhabditis elegans.